We begin with the raw amino-acid sequence, 185 residues long: Photosystem I assembly protein Ycf4 (185 aa).

Transmembrane regions (helical) follow at residues 20–40 and 57–77; these read GNFF…AVGA and ILFF…LFIS.

It belongs to the Ycf4 family.

It localises to the plastid. The protein localises to the chloroplast thylakoid membrane. Its function is as follows. Seems to be required for the assembly of the photosystem I complex. This chain is Photosystem I assembly protein Ycf4, found in Sorghum bicolor (Sorghum).